The following is a 393-amino-acid chain: NAD(P)H-quinone oxidoreductase subunit H, chloroplastic (393 aa).

It belongs to the complex I 49 kDa subunit family. In terms of assembly, NDH is composed of at least 16 different subunits, 5 of which are encoded in the nucleus.

The protein localises to the plastid. Its subcellular location is the chloroplast thylakoid membrane. The enzyme catalyses a plastoquinone + NADH + (n+1) H(+)(in) = a plastoquinol + NAD(+) + n H(+)(out). It catalyses the reaction a plastoquinone + NADPH + (n+1) H(+)(in) = a plastoquinol + NADP(+) + n H(+)(out). In terms of biological role, NDH shuttles electrons from NAD(P)H:plastoquinone, via FMN and iron-sulfur (Fe-S) centers, to quinones in the photosynthetic chain and possibly in a chloroplast respiratory chain. The immediate electron acceptor for the enzyme in this species is believed to be plastoquinone. Couples the redox reaction to proton translocation, and thus conserves the redox energy in a proton gradient. This chain is NAD(P)H-quinone oxidoreductase subunit H, chloroplastic, found in Chlorokybus atmophyticus (Soil alga).